The chain runs to 1498 residues: DNA-directed RNA polymerase subunit beta' (1498 aa).

4 residues coordinate Zn(2+): cysteine 67, cysteine 69, cysteine 82, and cysteine 85. Mg(2+) contacts are provided by aspartate 499, aspartate 501, and aspartate 503. Zn(2+) is bound by residues cysteine 867, cysteine 943, cysteine 950, and cysteine 953.

It belongs to the RNA polymerase beta' chain family. In terms of assembly, the RNAP catalytic core consists of 2 alpha, 1 beta, 1 beta' and 1 omega subunit. When a sigma factor is associated with the core the holoenzyme is formed, which can initiate transcription. Requires Mg(2+) as cofactor. Zn(2+) is required as a cofactor.

The enzyme catalyses RNA(n) + a ribonucleoside 5'-triphosphate = RNA(n+1) + diphosphate. DNA-dependent RNA polymerase catalyzes the transcription of DNA into RNA using the four ribonucleoside triphosphates as substrates. This is DNA-directed RNA polymerase subunit beta' from Chlorobium phaeobacteroides (strain BS1).